The following is a 121-amino-acid chain: Large ribosomal subunit protein bL20 (121 aa).

The protein belongs to the bacterial ribosomal protein bL20 family.

In terms of biological role, binds directly to 23S ribosomal RNA and is necessary for the in vitro assembly process of the 50S ribosomal subunit. It is not involved in the protein synthesizing functions of that subunit. The polypeptide is Large ribosomal subunit protein bL20 (Wolbachia sp. subsp. Brugia malayi (strain TRS)).